Reading from the N-terminus, the 152-residue chain is D-aminoacyl-tRNA deacylase (152 aa).

Residues 142–143 (GP) carry the Gly-cisPro motif, important for rejection of L-amino acids motif.

Belongs to the DTD family. As to quaternary structure, homodimer.

Its subcellular location is the cytoplasm. The catalysed reaction is glycyl-tRNA(Ala) + H2O = tRNA(Ala) + glycine + H(+). It catalyses the reaction a D-aminoacyl-tRNA + H2O = a tRNA + a D-alpha-amino acid + H(+). In terms of biological role, an aminoacyl-tRNA editing enzyme that deacylates mischarged D-aminoacyl-tRNAs. Also deacylates mischarged glycyl-tRNA(Ala), protecting cells against glycine mischarging by AlaRS. Acts via tRNA-based rather than protein-based catalysis; rejects L-amino acids rather than detecting D-amino acids in the active site. By recycling D-aminoacyl-tRNA to D-amino acids and free tRNA molecules, this enzyme counteracts the toxicity associated with the formation of D-aminoacyl-tRNA entities in vivo and helps enforce protein L-homochirality. The chain is D-aminoacyl-tRNA deacylase from Burkholderia mallei (strain NCTC 10247).